The chain runs to 1239 residues: Protein strawberry notch homolog 1 (1239 aa).

The disordered stretch occupies residues 684–837 (AQSNNNSPRD…SANSNTNSSF (154 aa)). Positions 694-713 (SPCKENKIKKRKGEEVSREA) are enriched in basic and acidic residues. Over residues 728–744 (DESESESDASDNEESDN) the composition is skewed to acidic residues. Residues 778–790 (KEHKKVKEKKKKK) show a composition bias toward basic residues. The span at 814 to 837 (FTSTVGTTTSSTNASANSNTNSSF) shows a compositional bias: low complexity. The stretch at 838–866 (VTSQDAVERAQQMKKELLDKLEKLAEDLP) forms a coiled coil.

Belongs to the SBNO family.

Its subcellular location is the nucleus. Functionally, plays a crucial role in the regulation of neural stem cells (NSCs) proliferation. Enhances the phosphorylation of GSK3B through the PI3K-Akt signaling pathway, thereby upregulating the Wnt/beta-catenin signaling pathway and promoting the proliferation of NSCs. This Gallus gallus (Chicken) protein is Protein strawberry notch homolog 1 (SBNO1).